A 798-amino-acid polypeptide reads, in one-letter code: MEASGKLICRQRQVLFSFLLLGLSLAGAAEPRSYSVVEETEGSSFVTNLAKDLGLEQREFSRRGVRVVSRGNKLHLQLNQETADLLLNEKLDREDLCGHTEPCVLRFQVLLESPFEFFQAELQVIDINDHSPVFLDKQMLVKVSESSPPGTTFPLKNAEDLDVGQNNIENYIISPNSYFRVLTRKRSDGRKYPELVLDKALDREEEAELRLTLTALDGGSPPRSGTAQVYIEVLDVNDNAPEFEQPFYRVQISEDSPVGFLVVKVSATDVDTGVNGEISYSLFQASEEIGKTFKINPLTGEIELKKQLDFEKLQSYEVNIEARDAGTFSGKCTVLIQVIDVNDHAPEVTMSAFTSPIPENAPETVVALFSVSDLDSGENGKISCSIQEDLPFLLKSAENFYTLLTERPLDRESRAEYNITITVTDLGTPMLITQLNMTVLIADVNDNAPAFTQTSYTLFVRENNSPALHIRSVSATDRDSGTNAQVTYSLLPPQDPHLPLTSLVSINADNGHLFALRSLDYEALQGFQFRVGASDHGSPALSSEALVRVVVLDANDNSPFVLYPLQNGSAPCTELVPRAAEPGYLVTKVVAVDGDSGQNAWLSYQLLKATELGLFGVWAHNGEVRTARLLSERDAAKHRLVVLVKDNGEPPRSATATLHVLLVDGFSQPYLPLPEAAPTQAQADLLTVYLVVALASVSSLFLFSVLLFVAVRLCRRSRAASVGRCLVPEGPLPGHLVDMSGTRTLSQSYQYEVCLAGGSGTNEFKFLKPIIPNFPPQCPGKEIQGNSTFPNNFGFNIQ.

The first 28 residues, 1–28 (MEASGKLICRQRQVLFSFLLLGLSLAGA), serve as a signal peptide directing secretion. Over 29-690 (AEPRSYSVVE…AQADLLTVYL (662 aa)) the chain is Extracellular. Cadherin domains lie at 36 to 134 (VVEE…SPVF), 139 to 243 (MLVK…APEF), 248 to 348 (YRVQ…APEV), 353 to 451 (FTSP…APAF), and 456 to 561 (YTLF…SPFV). N-linked (GlcNAc...) asparagine glycosylation is found at Asn418 and Asn436. N-linked (GlcNAc...) asparagine glycosylation occurs at Asn567. Positions 568 to 671 (GSAPCTELVP…LVDGFSQPYL (104 aa)) constitute a Cadherin 6 domain. The chain crosses the membrane as a helical span at residues 691-711 (VVALASVSSLFLFSVLLFVAV). The Cytoplasmic segment spans residues 712–798 (RLCRRSRAAS…FPNNFGFNIQ (87 aa)).

Its subcellular location is the cell membrane. Potential calcium-dependent cell-adhesion protein. May be involved in the establishment and maintenance of specific neuronal connections in the brain. The chain is Protocadherin beta-13 (PCDHB13) from Homo sapiens (Human).